The sequence spans 482 residues: Glycogen synthase (482 aa).

An ADP-alpha-D-glucose-binding site is contributed by K15.

Belongs to the glycosyltransferase 1 family. Bacterial/plant glycogen synthase subfamily.

It catalyses the reaction [(1-&gt;4)-alpha-D-glucosyl](n) + ADP-alpha-D-glucose = [(1-&gt;4)-alpha-D-glucosyl](n+1) + ADP + H(+). The protein operates within glycan biosynthesis; glycogen biosynthesis. Its function is as follows. Synthesizes alpha-1,4-glucan chains using ADP-glucose. The sequence is that of Glycogen synthase from Hydrogenobaculum sp. (strain Y04AAS1).